Consider the following 178-residue polypeptide: tRNA (cytidine(56)-2'-O)-methyltransferase (178 aa).

S-adenosyl-L-methionine-binding positions include leucine 84, glycine 112 to valine 116, and valine 130 to glutamate 137.

The protein belongs to the aTrm56 family. As to quaternary structure, homodimer.

It localises to the cytoplasm. It carries out the reaction cytidine(56) in tRNA + S-adenosyl-L-methionine = 2'-O-methylcytidine(56) in tRNA + S-adenosyl-L-homocysteine + H(+). Functionally, specifically catalyzes the AdoMet-dependent 2'-O-ribose methylation of cytidine at position 56 in tRNAs. The chain is tRNA (cytidine(56)-2'-O)-methyltransferase from Methanocella arvoryzae (strain DSM 22066 / NBRC 105507 / MRE50).